Here is a 54-residue protein sequence, read N- to C-terminus: Ovomucoid (54 aa).

A Kazal-like domain is found at 4–54 (VDCSEYPKPACTMEHRPLCGSDNQTYDNKCNFCNAVVESNGTLTLSHFGKC). Disulfide bonds link C6/C36, C14/C33, and C22/C54. N-linked (GlcNAc...) asparagine glycosylation occurs at N43.

Its subcellular location is the secreted. This chain is Ovomucoid, found in Guttera pucherani (Eastern crested guineafowl).